The following is a 41-amino-acid chain: Photosystem II reaction center protein L (41 aa).

A helical transmembrane segment spans residues 20 to 40 (SLYLGLLLVFVVGLLFSSYFL).

It belongs to the PsbL family. PSII is composed of 1 copy each of membrane proteins PsbA, PsbB, PsbC, PsbD, PsbE, PsbF, PsbH, PsbI, PsbJ, PsbK, PsbL, PsbM, PsbT, PsbX, PsbY, PsbZ, Psb30/Ycf12, peripheral proteins PsbO, CyanoQ (PsbQ), PsbU, PsbV and a large number of cofactors. It forms dimeric complexes.

Its subcellular location is the cellular thylakoid membrane. One of the components of the core complex of photosystem II (PSII). PSII is a light-driven water:plastoquinone oxidoreductase that uses light energy to abstract electrons from H(2)O, generating O(2) and a proton gradient subsequently used for ATP formation. It consists of a core antenna complex that captures photons, and an electron transfer chain that converts photonic excitation into a charge separation. This subunit is found at the monomer-monomer interface and is required for correct PSII assembly and/or dimerization. In Synechococcus sp. (strain JA-3-3Ab) (Cyanobacteria bacterium Yellowstone A-Prime), this protein is Photosystem II reaction center protein L.